A 213-amino-acid chain; its full sequence is Orotate phosphoribosyltransferase (213 aa).

Lys-26 is a binding site for 5-phospho-alpha-D-ribose 1-diphosphate. Position 34–35 (Phe-34–Phe-35) interacts with orotate. 5-phospho-alpha-D-ribose 1-diphosphate is bound by residues Tyr-72 to Lys-73, Arg-99, Lys-100, Lys-103, His-105, and Asp-124 to Ala-132. The orotate site is built by Thr-128 and Arg-156.

It belongs to the purine/pyrimidine phosphoribosyltransferase family. PyrE subfamily. Homodimer. Requires Mg(2+) as cofactor.

It carries out the reaction orotidine 5'-phosphate + diphosphate = orotate + 5-phospho-alpha-D-ribose 1-diphosphate. It functions in the pathway pyrimidine metabolism; UMP biosynthesis via de novo pathway; UMP from orotate: step 1/2. Its function is as follows. Catalyzes the transfer of a ribosyl phosphate group from 5-phosphoribose 1-diphosphate to orotate, leading to the formation of orotidine monophosphate (OMP). The sequence is that of Orotate phosphoribosyltransferase from Actinobacillus pleuropneumoniae serotype 5b (strain L20).